Here is a 63-residue protein sequence, read N- to C-terminus: Metallothionein-like protein type 3 (63 aa).

This sequence belongs to the metallothionein superfamily. Type 15 family.

Metallothioneins have a high content of cysteine residues that bind various heavy metals. In Actinidia deliciosa (Kiwi), this protein is Metallothionein-like protein type 3.